We begin with the raw amino-acid sequence, 251 residues long: MLRLGVNIDHVATIRNARGSSYPEPVRAAELALAAGADGITAHLREDRRHISDADIALLTDLCLKRGKPLNFEMAVTDEMVGIALQARPHAACLVPERREEVTTEGGLDVVKGFDKIAAATARLRTAGARVSLFIEADPAQIQASADAGAQVVELHTGAYCDAAREGHADRAAAILERLKTGAELAASLGLEVHAGHGIDYATVKPIAAIPQIAELNIGHFLIGEAIFVGLPQAMQRMRVLMDAARLEVAA.

Asparagine 7 serves as a coordination point for 3-amino-2-oxopropyl phosphate. 9-10 lines the 1-deoxy-D-xylulose 5-phosphate pocket; it reads DH. 3-amino-2-oxopropyl phosphate is bound at residue arginine 18. The active-site Proton acceptor is histidine 43. Arginine 45 and histidine 50 together coordinate 1-deoxy-D-xylulose 5-phosphate. Catalysis depends on glutamate 73, which acts as the Proton acceptor. A 1-deoxy-D-xylulose 5-phosphate-binding site is contributed by threonine 103. Histidine 197 acts as the Proton donor in catalysis. Residues glycine 198 and 219–220 each bind 3-amino-2-oxopropyl phosphate; that span reads GH.

It belongs to the PNP synthase family. Homooctamer; tetramer of dimers.

The protein localises to the cytoplasm. It carries out the reaction 3-amino-2-oxopropyl phosphate + 1-deoxy-D-xylulose 5-phosphate = pyridoxine 5'-phosphate + phosphate + 2 H2O + H(+). The protein operates within cofactor biosynthesis; pyridoxine 5'-phosphate biosynthesis; pyridoxine 5'-phosphate from D-erythrose 4-phosphate: step 5/5. In terms of biological role, catalyzes the complicated ring closure reaction between the two acyclic compounds 1-deoxy-D-xylulose-5-phosphate (DXP) and 3-amino-2-oxopropyl phosphate (1-amino-acetone-3-phosphate or AAP) to form pyridoxine 5'-phosphate (PNP) and inorganic phosphate. This is Pyridoxine 5'-phosphate synthase from Caulobacter sp. (strain K31).